The primary structure comprises 316 residues: Bifunctional peptidase and (3S)-lysyl hydroxylase JMJD7 (316 aa).

Residues 128-307 (VQKQCSNLPS…LKYSYFQLLD (180 aa)) enclose the JmjC domain. Positions 178, 180, and 277 each coordinate Fe cation.

As to quaternary structure, homodimer; disulfide-linked. Interacts with DRG1 and DRG2. It depends on Fe(2+) as a cofactor.

It localises to the nucleus. It is found in the cytoplasm. It carries out the reaction L-lysyl-[protein] + 2-oxoglutarate + O2 = (3S)-3-hydroxy-L-lysyl-[protein] + succinate + CO2. Functionally, bifunctional enzyme that acts both as an endopeptidase and 2-oxoglutarate-dependent monooxygenase. Endopeptidase that cleaves histones N-terminal tails at the carboxyl side of methylated arginine or lysine residues, to generate 'tailless nucleosomes', which may trigger transcription elongation. Preferentially recognizes and cleaves monomethylated and dimethylated arginine residues of histones H2, H3 and H4. After initial cleavage, continues to digest histones tails via its aminopeptidase activity. Additionally, may play a role in protein biosynthesis by modifying the translation machinery. Acts as a Fe(2+) and 2-oxoglutarate-dependent monooxygenase, catalyzing (S)-stereospecific hydroxylation at C-3 of 'Lys-22' of DRG1 and 'Lys-21' of DRG2 translation factors (TRAFAC), promoting their interaction with ribonucleic acids (RNA). In Homo sapiens (Human), this protein is Bifunctional peptidase and (3S)-lysyl hydroxylase JMJD7.